Consider the following 161-residue polypeptide: Probable cell wall elongation regulator TseB (161 aa).

The Cytoplasmic segment spans residues 1–5; sequence MRKKA. A helical transmembrane segment spans residues 6–26; it reads LIFTVIFGIIFLAVLLVSASI. At 27 to 161 the chain is on the extracellular side; that stretch reads YKSAMAQKEE…TGKILKNITP (135 aa).

As to quaternary structure, interacts with the penicillin-binding protein PBP2A, a monofunctional transpeptidase.

The protein resides in the cell membrane. In terms of biological role, required for normal cell shape. Plays an important role in cell wall elongation during exponential phase and spore outgrowth. Probably regulates the activity of the penicillin-binding protein PBP2A through a direct interaction. Not required for PBP2A activity, stability and localization. This chain is Probable cell wall elongation regulator TseB, found in Bacillus subtilis (strain 168).